Here is a 180-residue protein sequence, read N- to C-terminus: UPF0102 protein Tery_0733 (180 aa).

It belongs to the UPF0102 family.

This chain is UPF0102 protein Tery_0733, found in Trichodesmium erythraeum (strain IMS101).